Reading from the N-terminus, the 281-residue chain is L-cysteine S-thiosulfotransferase subunit SoxA (281 aa).

Residues 1–25 (MTKHGFLLATLVLAGATLPIGPVTA) form the signal peptide. A disulfide bond links Cys-99 and Cys-130. The Cytochrome c domain occupies 175–281 (AAYEQGKRFY…LELNGPGARK (107 aa)). Residues Cys-195 and His-199 each contribute to the heme site. Arg-238 contacts substrate. Heme is bound at residue Cys-242. The active-site Cysteine persulfide intermediate is Cys-242.

This sequence belongs to the SoxA family. Heterodimer of SoxA and SoxX. The cofactor is heme. Cysteine persulfide at Cys-242.

It is found in the periplasm. It catalyses the reaction L-cysteinyl-[SoxY protein] + thiosulfate + 2 Fe(III)-[cytochrome c] = S-sulfosulfanyl-L-cysteinyl-[SoxY protein] + 2 Fe(II)-[cytochrome c] + 2 H(+). It carries out the reaction S-sulfanyl-L-cysteinyl-[SoxY protein] + thiosulfate + 2 Fe(III)-[cytochrome c] = S-(2-sulfodisulfanyl)-L-cysteinyl-[SoxY protein] + 2 Fe(II)-[cytochrome c] + 2 H(+). Functionally, C-type monoheme cytochrome, which is part of the SoxAX cytochrome complex involved in sulfur oxidation. The SoxAX complex catalyzes the formation of a heterodisulfide bond between the conserved cysteine residue on a sulfur carrier SoxYZ complex subunit SoxY and thiosulfate or other inorganic sulfur substrates. This leads to the intermediary formation of conspicuous sulfur globules inside of the cells. The polypeptide is L-cysteine S-thiosulfotransferase subunit SoxA (Allochromatium vinosum (Chromatium vinosum)).